The primary structure comprises 149 residues: Macrodomain Ter protein (149 aa).

The protein belongs to the MatP family. As to quaternary structure, homodimer.

The protein localises to the cytoplasm. In terms of biological role, required for spatial organization of the terminus region of the chromosome (Ter macrodomain) during the cell cycle. Prevents early segregation of duplicated Ter macrodomains during cell division. Binds specifically to matS, which is a 13 bp signature motif repeated within the Ter macrodomain. The protein is Macrodomain Ter protein of Vibrio parahaemolyticus serotype O3:K6 (strain RIMD 2210633).